We begin with the raw amino-acid sequence, 406 residues long: Succinylornithine transaminase (406 aa).

K252 bears the N6-(pyridoxal phosphate)lysine mark.

Belongs to the class-III pyridoxal-phosphate-dependent aminotransferase family. AstC subfamily. The cofactor is pyridoxal 5'-phosphate.

The enzyme catalyses N(2)-succinyl-L-ornithine + 2-oxoglutarate = N-succinyl-L-glutamate 5-semialdehyde + L-glutamate. The protein operates within amino-acid degradation; L-arginine degradation via AST pathway; L-glutamate and succinate from L-arginine: step 3/5. Its function is as follows. Catalyzes the transamination of N(2)-succinylornithine and alpha-ketoglutarate into N(2)-succinylglutamate semialdehyde and glutamate. Can also act as an acetylornithine aminotransferase. This is Succinylornithine transaminase from Escherichia coli O139:H28 (strain E24377A / ETEC).